A 201-amino-acid polypeptide reads, in one-letter code: FMN-dependent NADH:quinone oxidoreductase (201 aa).

FMN-binding positions include S10, 16–18 (SQS), 96–99 (MYNF), and 140–143 (SRGG).

The protein belongs to the azoreductase type 1 family. As to quaternary structure, homodimer. The cofactor is FMN.

It carries out the reaction 2 a quinone + NADH + H(+) = 2 a 1,4-benzosemiquinone + NAD(+). The enzyme catalyses N,N-dimethyl-1,4-phenylenediamine + anthranilate + 2 NAD(+) = 2-(4-dimethylaminophenyl)diazenylbenzoate + 2 NADH + 2 H(+). Functionally, quinone reductase that provides resistance to thiol-specific stress caused by electrophilic quinones. In terms of biological role, also exhibits azoreductase activity. Catalyzes the reductive cleavage of the azo bond in aromatic azo compounds to the corresponding amines. The sequence is that of FMN-dependent NADH:quinone oxidoreductase from Citrobacter koseri (strain ATCC BAA-895 / CDC 4225-83 / SGSC4696).